The sequence spans 220 residues: Guanylate kinase (220 aa).

The Guanylate kinase-like domain occupies G14–N194. S21–S28 is a binding site for ATP.

The protein belongs to the guanylate kinase family.

The protein localises to the cytoplasm. It catalyses the reaction GMP + ATP = GDP + ADP. Its function is as follows. Essential for recycling GMP and indirectly, cGMP. This is Guanylate kinase from Brucella abortus (strain 2308).